A 401-amino-acid polypeptide reads, in one-letter code: Na(+)/H(+) antiporter NhaA 2 (401 aa).

Helical transmembrane passes span 13–33 (AAGGVLLVIAAAIAMVLANSP), 59–79 (LLLWVNDGLMAIFFFLVGLEV), 94–114 (ITLPAVAAIAGIVFPALIYVW), 125–145 (GWAIPSATDIAFAVGVFTIFG), 154–174 (LFLLSVAIFDDIGAIVIIALF), 178–198 (DLSTTSLIVACAGFVALFLLN), 209–229 (VLIGVVVWAAVLKSGVHATLA), 260–280 (WVGFVVLPIFAFANAGVSLFG), 292–312 (LGIAVGLFVGKQLGIFGVCWI), 332–352 (GVSLLCGIGFTMSLFIGSLAF), and 363–383 (VKAGVLLGSLVSAVLGAVLLA).

It belongs to the NhaA Na(+)/H(+) (TC 2.A.33) antiporter family.

The protein localises to the cell inner membrane. The catalysed reaction is Na(+)(in) + 2 H(+)(out) = Na(+)(out) + 2 H(+)(in). Na(+)/H(+) antiporter that extrudes sodium in exchange for external protons. In Pseudoalteromonas atlantica (strain T6c / ATCC BAA-1087), this protein is Na(+)/H(+) antiporter NhaA 2.